A 71-amino-acid chain; its full sequence is Large ribosomal subunit protein bL31 (71 aa).

Zn(2+) is bound by residues Cys-16, Cys-18, Cys-37, and Cys-40.

This sequence belongs to the bacterial ribosomal protein bL31 family. Type A subfamily. As to quaternary structure, part of the 50S ribosomal subunit. It depends on Zn(2+) as a cofactor.

Its function is as follows. Binds the 23S rRNA. The polypeptide is Large ribosomal subunit protein bL31 (Pseudoalteromonas atlantica (strain T6c / ATCC BAA-1087)).